A 248-amino-acid polypeptide reads, in one-letter code: 1-(5-phosphoribosyl)-5-[(5-phosphoribosylamino)methylideneamino] imidazole-4-carboxamide isomerase (248 aa).

The Proton acceptor role is filled by aspartate 8. Aspartate 129 functions as the Proton donor in the catalytic mechanism.

This sequence belongs to the HisA/HisF family.

The protein resides in the cytoplasm. The enzyme catalyses 1-(5-phospho-beta-D-ribosyl)-5-[(5-phospho-beta-D-ribosylamino)methylideneamino]imidazole-4-carboxamide = 5-[(5-phospho-1-deoxy-D-ribulos-1-ylimino)methylamino]-1-(5-phospho-beta-D-ribosyl)imidazole-4-carboxamide. It functions in the pathway amino-acid biosynthesis; L-histidine biosynthesis; L-histidine from 5-phospho-alpha-D-ribose 1-diphosphate: step 4/9. This chain is 1-(5-phosphoribosyl)-5-[(5-phosphoribosylamino)methylideneamino] imidazole-4-carboxamide isomerase, found in Rhizobium leguminosarum bv. trifolii (strain WSM2304).